Reading from the N-terminus, the 322-residue chain is D-alanine--D-alanine ligase (322 aa).

An ATP-grasp domain is found at 108–311 (KEFYYNAELP…FPSLLDTLIE (204 aa)). 136–192 (IEDLGLPLVVKPACAGSSIGISLAHTEEELLAGINHARDCSAGAIMVEQFIKGRELT) contacts ATP. Mg(2+) contacts are provided by Asp265, Glu278, and Asn280.

The protein belongs to the D-alanine--D-alanine ligase family. It depends on Mg(2+) as a cofactor. Requires Mn(2+) as cofactor.

The protein resides in the cytoplasm. It catalyses the reaction 2 D-alanine + ATP = D-alanyl-D-alanine + ADP + phosphate + H(+). The protein operates within cell wall biogenesis; peptidoglycan biosynthesis. Functionally, cell wall formation. In Desulfotalea psychrophila (strain LSv54 / DSM 12343), this protein is D-alanine--D-alanine ligase.